Here is a 464-residue protein sequence, read N- to C-terminus: E3 ubiquitin-protein ligase TRAIP (464 aa).

The segment at 7 to 50 (CTICSDFFDNARDVAAITCGHTFHQECLLQWFHSAPHRTCPQCR) adopts an RING-type; atypical zinc-finger fold. Coiled-coil stretches lie at residues 142-186 (LDKQ…MIRD) and 236-277 (AQKA…LQKT). A disordered region spans residues 439 to 464 (KRKKVSRPTACTSSLANQPRLEDFLK). Positions 456–464 (QPRLEDFLK) match the PIP-box motif.

It belongs to the TRAIP family.

The protein resides in the nucleus. The protein localises to the nucleoplasm. It localises to the nucleolus. Its subcellular location is the chromosome. It is found in the cytoplasm. It catalyses the reaction S-ubiquitinyl-[E2 ubiquitin-conjugating enzyme]-L-cysteine + [acceptor protein]-L-lysine = [E2 ubiquitin-conjugating enzyme]-L-cysteine + N(6)-ubiquitinyl-[acceptor protein]-L-lysine.. It participates in protein modification; protein ubiquitination. In terms of biological role, E3 ubiquitin ligase required to protect genome stability in response to replication stress. Acts as a key regulator of interstrand cross-link repair, which takes place when both strands of duplex DNA are covalently tethered together, thereby blocking replication and transcription. Controls the choice between the two pathways of replication-coupled interstrand-cross-link repair by mediating ubiquitination of mcm7 subunit of the CMG helicase complex. Short ubiquitin chains on mcm7 promote recruitment of DNA glycosylase neil3. If the interstrand cross-link cannot be cleaved by neil3, the ubiquitin chains continue to grow on mcm7, promoting the unloading of the CMG helicase complex by the vcp/p97 ATPase, enabling the Fanconi anemia DNA repair pathway. Only catalyzes ubiquitination of mcm7 when forks converge. Also involved in the repair of covalent DNA-protein cross-links (DPCs) during DNA synthesis: promotes ubiquitination of DPCs, leading to their degradation by the proteasome. Also acts as a negative regulator of innate immune signaling by inhibiting activation of NF-kappa-B mediated by TNF. This chain is E3 ubiquitin-protein ligase TRAIP, found in Xenopus laevis (African clawed frog).